The sequence spans 294 residues: Cytidine deaminase (294 aa).

2 consecutive CMP/dCMP-type deaminase domains span residues 49–169 and 188–294; these read TPQQ…FGPA and ETQD…YIAL. A substrate-binding site is contributed by 90–92; sequence NLE. Histidine 103 provides a ligand contact to Zn(2+). The active-site Proton donor is the glutamate 105. Zn(2+) contacts are provided by cysteine 130 and cysteine 133.

It belongs to the cytidine and deoxycytidylate deaminase family. Homodimer. It depends on Zn(2+) as a cofactor.

The catalysed reaction is cytidine + H2O + H(+) = uridine + NH4(+). It catalyses the reaction 2'-deoxycytidine + H2O + H(+) = 2'-deoxyuridine + NH4(+). This enzyme scavenges exogenous and endogenous cytidine and 2'-deoxycytidine for UMP synthesis. This chain is Cytidine deaminase, found in Pasteurella multocida (strain Pm70).